Here is a 1044-residue protein sequence, read N- to C-terminus: Elongation factor 3 (1044 aa).

Residues 5–42 (AQSIKVLGELFEKLSVATAENREATATEIASFLNGNII) form an HEAT 1 repeat. Residues I42 and H44 each coordinate ADP. One copy of the HEAT 2 repeat lies at 45–80 (DVPEEFFKNLTKAVKDKKTAAAALETIAHIANENNL). Position 83 (S83) interacts with ADP. HEAT repeat units follow at residues 86-123 (PYIV…AIDP), 124-162 (VAIK…AAKT), 166-203 (LRMP…TVDN), 205-241 (DIER…EVTP), 242-279 (ATLS…LVED), and 285-323 (PFLE…VGNV). The ADP site is built by T392, H396, and E397. 2 consecutive ABC transporter domains span residues 426–641 (DEGE…YYEL) and 667–993 (VKVS…KKED). The ADP site is built by N703, E922, N925, and H951. Positions 975–1044 (GHNWVSGQGS…DAYVSSDDEF (70 aa)) are disordered. The segment covering 987–999 (RLEKKEDEGDKFD) has biased composition (basic and acidic residues). Residues 1009-1031 (NKKKKLSSAELRKKKKERMKKKK) show a composition bias toward basic residues.

Belongs to the ABC transporter superfamily. ABCF family. EF3 subfamily. Monomer.

It is found in the cytoplasm. It catalyses the reaction ATP + H2O = ADP + phosphate + H(+). It functions in the pathway protein biosynthesis; polypeptide chain elongation. Its function is as follows. Ribosome-dependent ATPase that functions in cytoplasmic translation elongation. Required for the ATP-dependent release of deacylated tRNA from the ribosomal E-site during protein biosynthesis. Stimulates the eEF1A-dependent binding of aminoacyl-tRNA to the ribosomal A-site, which has reduced affinity for tRNA as long as the E-site is occupied. Assists translation termination by stimulating the release of nascent protein from the ribosome by release factors. In Eremothecium gossypii (strain ATCC 10895 / CBS 109.51 / FGSC 9923 / NRRL Y-1056) (Yeast), this protein is Elongation factor 3 (TEF3).